The sequence spans 97 residues: Co-chaperonin GroES (97 aa).

This sequence belongs to the GroES chaperonin family. Heptamer of 7 subunits arranged in a ring. Interacts with the chaperonin GroEL.

It localises to the cytoplasm. Together with the chaperonin GroEL, plays an essential role in assisting protein folding. The GroEL-GroES system forms a nano-cage that allows encapsulation of the non-native substrate proteins and provides a physical environment optimized to promote and accelerate protein folding. GroES binds to the apical surface of the GroEL ring, thereby capping the opening of the GroEL channel. This Pectobacterium carotovorum subsp. carotovorum (strain PC1) protein is Co-chaperonin GroES.